The following is a 560-amino-acid chain: Diphtheria toxin (560 aa).

Positions M1 to A25 are cleaved as a signal peptide. 2 residues coordinate NAD(+): H46 and Y90. Residue E173 is part of the active site. Intrachain disulfides connect C211/C226 and C486/C496.

In terms of assembly, homodimer.

It catalyses the reaction diphthamide-[translation elongation factor 2] + NAD(+) = N-(ADP-D-ribosyl)diphthamide-[translation elongation factor 2] + nicotinamide + H(+). Diphtheria toxin, produced by a phage infecting Corynebacterium diphtheriae, is a proenzyme that, after activation, catalyzes the covalent attachment of the ADP ribose moiety of NAD to elongation factor 2. Fragment A is responsible for enzymatic ADP-ribosylation of elongation factor 2, while fragment B is responsible for binding of toxin to cell receptors and entry of fragment A. This Corynephage omega protein is Diphtheria toxin.